The primary structure comprises 393 residues: Enoyl-[acyl-carrier-protein] reductase [NADH] (393 aa).

NAD(+)-binding positions include 48–53 (GSSTGY), 74–75 (FE), 111–112 (DA), and 139–140 (LA). Tyr-225 contacts substrate. Tyr-235 functions as the Proton donor in the catalytic mechanism. Residues Lys-244 and 273 to 275 (LVT) each bind NAD(+).

This sequence belongs to the TER reductase family. In terms of assembly, monomer.

It catalyses the reaction a 2,3-saturated acyl-[ACP] + NAD(+) = a (2E)-enoyl-[ACP] + NADH + H(+). It functions in the pathway lipid metabolism; fatty acid biosynthesis. In terms of biological role, involved in the final reduction of the elongation cycle of fatty acid synthesis (FAS II). Catalyzes the reduction of a carbon-carbon double bond in an enoyl moiety that is covalently linked to an acyl carrier protein (ACP). This is Enoyl-[acyl-carrier-protein] reductase [NADH] from Pseudoalteromonas atlantica (strain T6c / ATCC BAA-1087).